We begin with the raw amino-acid sequence, 196 residues long: Protein GrpE (196 aa).

The disordered stretch occupies residues 1 to 40 (MSSKEQKTPEGQAPEEIIMDQHEEVEAVEPNDSAEQVDPR).

The protein belongs to the GrpE family. As to quaternary structure, homodimer.

It is found in the cytoplasm. Functionally, participates actively in the response to hyperosmotic and heat shock by preventing the aggregation of stress-denatured proteins, in association with DnaK and GrpE. It is the nucleotide exchange factor for DnaK and may function as a thermosensor. Unfolded proteins bind initially to DnaJ; upon interaction with the DnaJ-bound protein, DnaK hydrolyzes its bound ATP, resulting in the formation of a stable complex. GrpE releases ADP from DnaK; ATP binding to DnaK triggers the release of the substrate protein, thus completing the reaction cycle. Several rounds of ATP-dependent interactions between DnaJ, DnaK and GrpE are required for fully efficient folding. This Salmonella gallinarum (strain 287/91 / NCTC 13346) protein is Protein GrpE.